The chain runs to 211 residues: Thymidylate kinase (211 aa).

ATP is bound at residue 10–17 (GGDGVGKS).

This sequence belongs to the thymidylate kinase family.

It carries out the reaction dTMP + ATP = dTDP + ADP. Its function is as follows. Phosphorylation of dTMP to form dTDP in both de novo and salvage pathways of dTTP synthesis. The sequence is that of Thymidylate kinase from Clavibacter sepedonicus (Clavibacter michiganensis subsp. sepedonicus).